The chain runs to 323 residues: tRNA dimethylallyltransferase (323 aa).

12 to 19 provides a ligand contact to ATP; the sequence is GPTAAGKT. 14-19 provides a ligand contact to substrate; it reads TAAGKT. Interaction with substrate tRNA regions lie at residues 37–40 and 161–165; these read DSAL and QRLIR.

The protein belongs to the IPP transferase family. As to quaternary structure, monomer. Requires Mg(2+) as cofactor.

It carries out the reaction adenosine(37) in tRNA + dimethylallyl diphosphate = N(6)-dimethylallyladenosine(37) in tRNA + diphosphate. Catalyzes the transfer of a dimethylallyl group onto the adenine at position 37 in tRNAs that read codons beginning with uridine, leading to the formation of N6-(dimethylallyl)adenosine (i(6)A). In Pseudomonas putida (strain GB-1), this protein is tRNA dimethylallyltransferase.